Reading from the N-terminus, the 203-residue chain is Urease accessory protein UreG (203 aa).

A GTP-binding site is contributed by 10-17 (GPVGAGKT).

This sequence belongs to the SIMIBI class G3E GTPase family. UreG subfamily. Homodimer. UreD, UreF and UreG form a complex that acts as a GTP-hydrolysis-dependent molecular chaperone, activating the urease apoprotein by helping to assemble the nickel containing metallocenter of UreC. The UreE protein probably delivers the nickel.

The protein resides in the cytoplasm. Functionally, facilitates the functional incorporation of the urease nickel metallocenter. This process requires GTP hydrolysis, probably effectuated by UreG. This is Urease accessory protein UreG from Micrococcus luteus (strain ATCC 4698 / DSM 20030 / JCM 1464 / CCM 169 / CCUG 5858 / IAM 1056 / NBRC 3333 / NCIMB 9278 / NCTC 2665 / VKM Ac-2230) (Micrococcus lysodeikticus).